The following is a 227-amino-acid chain: Cytidylate kinase (227 aa).

Residue 7-15 participates in ATP binding; that stretch reads GPAGSGKST.

This sequence belongs to the cytidylate kinase family. Type 1 subfamily.

It localises to the cytoplasm. The enzyme catalyses CMP + ATP = CDP + ADP. It catalyses the reaction dCMP + ATP = dCDP + ADP. The protein is Cytidylate kinase of Salinibacter ruber (strain DSM 13855 / M31).